Consider the following 612-residue polypeptide: Peroxisomal carnitine O-octanoyltransferase (612 aa).

The residue at position 1 (Met-1) is an N-acetylmethionine. Residues Lys-40 and Lys-57 each carry the N6-succinyllysine modification. The active-site Proton acceptor is the His-327. Residues Lys-406 and 410 to 417 (KNKMLHPD) each bind CoA. N6-acetyllysine; alternate is present on Lys-406. Residue Lys-406 is modified to N6-succinyllysine; alternate. Residues Tyr-439, Thr-441, and Thr-452 each coordinate (R)-carnitine. The Microbody targeting signal signature appears at 610-612 (THL).

The protein belongs to the carnitine/choline acetyltransferase family. As to quaternary structure, monomer.

It is found in the peroxisome. It catalyses the reaction octanoyl-CoA + (R)-carnitine = O-octanoyl-(R)-carnitine + CoA. The enzyme catalyses 4,8-dimethylnonanoyl-CoA + (R)-carnitine = O-4,8-dimethylnonanoyl-(R)-carnitine + CoA. Its pathway is lipid metabolism; fatty acid beta-oxidation. In terms of biological role, beta-oxidation of fatty acids. The highest activity concerns the C6 to C10 chain length substrate. Converts the end product of pristanic acid beta oxidation, 4,8-dimethylnonanoyl-CoA, to its corresponding carnitine ester. The sequence is that of Peroxisomal carnitine O-octanoyltransferase (CROT) from Homo sapiens (Human).